The chain runs to 671 residues: UvrABC system protein C (671 aa).

Residues 16 to 95 enclose the GIY-YIG domain; sequence VEPGVYRFRD…IKEFDPRFNV (80 aa). The 36-residue stretch at 208 to 243 folds into the UVR domain; it reads DRLARDMEREMNQAAQELNFERAARLRDNISALQRA. The segment at 645–671 is disordered; that stretch reads SSAPSSGATEAVLPAMVENGVDDTPST.

This sequence belongs to the UvrC family. As to quaternary structure, interacts with UvrB in an incision complex.

It is found in the cytoplasm. Its function is as follows. The UvrABC repair system catalyzes the recognition and processing of DNA lesions. UvrC both incises the 5' and 3' sides of the lesion. The N-terminal half is responsible for the 3' incision and the C-terminal half is responsible for the 5' incision. This is UvrABC system protein C from Mycobacteroides abscessus (strain ATCC 19977 / DSM 44196 / CCUG 20993 / CIP 104536 / JCM 13569 / NCTC 13031 / TMC 1543 / L948) (Mycobacterium abscessus).